The chain runs to 82 residues: Small ribosomal subunit protein bS16 (82 aa).

The protein belongs to the bacterial ribosomal protein bS16 family.

The sequence is that of Small ribosomal subunit protein bS16 from Crocosphaera subtropica (strain ATCC 51142 / BH68) (Cyanothece sp. (strain ATCC 51142)).